Here is a 204-residue protein sequence, read N- to C-terminus: Large ribosomal subunit protein uL4 (204 aa).

Residues 44-76 (KRQGTQSAKTRSEVRGGGIKPWRQKGTGRARQG) are disordered.

This sequence belongs to the universal ribosomal protein uL4 family. In terms of assembly, part of the 50S ribosomal subunit.

In terms of biological role, one of the primary rRNA binding proteins, this protein initially binds near the 5'-end of the 23S rRNA. It is important during the early stages of 50S assembly. It makes multiple contacts with different domains of the 23S rRNA in the assembled 50S subunit and ribosome. Functionally, forms part of the polypeptide exit tunnel. In Clostridium perfringens (strain ATCC 13124 / DSM 756 / JCM 1290 / NCIMB 6125 / NCTC 8237 / Type A), this protein is Large ribosomal subunit protein uL4.